The following is a 467-amino-acid chain: ATP synthase subunit beta, chloroplastic (467 aa).

Residue 149 to 156 (GGAGVGKT) participates in ATP binding.

Belongs to the ATPase alpha/beta chains family. In terms of assembly, F-type ATPases have 2 components, CF(1) - the catalytic core - and CF(0) - the membrane proton channel. CF(1) has five subunits: alpha(3), beta(3), gamma(1), delta(1), epsilon(1). CF(0) has four main subunits: a(1), b(1), b'(1) and c(9-12).

It localises to the plastid. The protein localises to the chloroplast thylakoid membrane. The enzyme catalyses ATP + H2O + 4 H(+)(in) = ADP + phosphate + 5 H(+)(out). Its function is as follows. Produces ATP from ADP in the presence of a proton gradient across the membrane. The catalytic sites are hosted primarily by the beta subunits. The protein is ATP synthase subunit beta, chloroplastic of Cyanidioschyzon merolae (strain NIES-3377 / 10D) (Unicellular red alga).